The chain runs to 167 residues: uncharacterized protein (167 aa).

This sequence to B.subtilis XkdI.

This is an uncharacterized protein from Bacillus subtilis (strain 168).